A 423-amino-acid chain; its full sequence is Probable efflux pump mfs2 (423 aa).

11 consecutive transmembrane segments (helical) span residues 21–41, 49–69, 79–99, 111–131, 138–158, 220–240, 256–278, 295–315, 319–339, 360–380, and 392–411; these read TMAL…IGPV, SIFH…GFAH, LLAG…LGDV, LYLL…GFIV, WMFW…LLFH, AILE…FSAL, YIVI…DYAY, IPLL…YGWA, HLIW…MQIF, AATQ…SNSL, and LLAF…LWRW.

This sequence belongs to the major facilitator superfamily.

It is found in the membrane. Its function is as follows. Probable efflux pump; part of the gene cluster 27 that mediates the biosynthesis of asparasone A, a sclerotium-specific anthraquinone pigment important for sclerotial survival. This Aspergillus flavus (strain ATCC 200026 / FGSC A1120 / IAM 13836 / NRRL 3357 / JCM 12722 / SRRC 167) protein is Probable efflux pump mfs2.